Reading from the N-terminus, the 497-residue chain is Serine/threonine protein phosphatase 2A 57 kDa regulatory subunit B' epsilon isoform (497 aa).

The disordered stretch occupies residues 12–71; it reads KFNKSDQHHQDNNNNNNNTSTNTVVRGSRTTTPAPSSVSNGESQTTAQSPSQTPNHPMFT. The segment covering 23–34 has biased composition (low complexity); that stretch reads NNNNNNNTSTNT. The span at 35 to 71 shows a compositional bias: polar residues; that stretch reads VVRGSRTTTPAPSSVSNGESQTTAQSPSQTPNHPMFT.

It belongs to the phosphatase 2A regulatory subunit B56 family. PP2A consists of a common heteromeric enzyme, composed of a catalytic subunit (subunits C), a constant regulatory subunit (subunit A), and a variety of regulatory subunits such as subunits B (the R2/B/PR55/B55, R3/B''/PR72/PR130/PR59 and R5/B'/B56 families). Expressed ubiquitously.

The protein localises to the cytoplasm. The B regulatory subunit may modulate substrate selectivity and catalytic activity, and may also direct the localization of the catalytic enzyme to a particular subcellular compartment. The polypeptide is Serine/threonine protein phosphatase 2A 57 kDa regulatory subunit B' epsilon isoform (B'EPSILON) (Arabidopsis thaliana (Mouse-ear cress)).